The following is a 431-amino-acid chain: Histidinol dehydrogenase (431 aa).

The NAD(+) site is built by Y130, Q192, and N215. Substrate-binding residues include S238, Q260, and H263. The Zn(2+) site is built by Q260 and H263. Catalysis depends on proton acceptor residues E328 and H329. Substrate-binding residues include H329, D362, E416, and H421. D362 serves as a coordination point for Zn(2+). H421 is a binding site for Zn(2+).

It belongs to the histidinol dehydrogenase family. Zn(2+) is required as a cofactor.

The enzyme catalyses L-histidinol + 2 NAD(+) + H2O = L-histidine + 2 NADH + 3 H(+). Its pathway is amino-acid biosynthesis; L-histidine biosynthesis; L-histidine from 5-phospho-alpha-D-ribose 1-diphosphate: step 9/9. Functionally, catalyzes the sequential NAD-dependent oxidations of L-histidinol to L-histidinaldehyde and then to L-histidine. The chain is Histidinol dehydrogenase from Thermosynechococcus vestitus (strain NIES-2133 / IAM M-273 / BP-1).